The sequence spans 449 residues: Heterogeneous nuclear ribonucleoprotein H2 (449 aa).

Met1 bears the N-acetylmethionine mark. Residue Met2 is modified to N-acetylmethionine; in Heterogeneous nuclear ribonucleoprotein H2, N-terminally processed. In terms of domain architecture, RRM 1 spans 11–90 (FVVKVRGLPW…RYVEVFKSNS (80 aa)). At Ser23 the chain carries Phosphoserine. A Glycyl lysine isopeptide (Lys-Gly) (interchain with G-Cter in SUMO2) cross-link involves residue Lys35. A phosphoserine mark is found at Ser54 and Ser63. Lys87 is covalently cross-linked (Glycyl lysine isopeptide (Lys-Gly) (interchain with G-Cter in SUMO2)). Ser90 carries the phosphoserine modification. Lys98 is covalently cross-linked (Glycyl lysine isopeptide (Lys-Gly) (interchain with G-Cter in SUMO2)). An RRM 2 domain is found at 111 to 188 (GFVRLRGLPF…RYIEIFKSSR (78 aa)). Dimethylated arginine; alternate is present on Arg233. An Omega-N-methylarginine; alternate modification is found at Arg233. One copy of the 1-1 repeat lies at 234–249 (GAYGGGYGGYDDYGGY). Residues 234 to 433 (GAYGGGYGGY…YGGQSSMSGY (200 aa)) form a 2 X 16 AA Gly-rich approximate repeats region. Tyr246 is modified (phosphotyrosine). Positions 289 to 364 (HCVHMRGLPY…RYVELFLNST (76 aa)) constitute an RRM 3 domain. Position 310 is a phosphoserine (Ser310). Tandem repeats lie at residues 354–372 (HRYVELFLNSTAGTSGGAY), 374–392 (HSYVELFLNSTAGASGGAY), and 418–433 (GGYGGGYGGQSSMSGY). The 2 X 19 AA perfect repeats stretch occupies residues 354 to 392 (HRYVELFLNSTAGTSGGAYDHSYVELFLNSTAGASGGAY).

In terms of assembly, component of a ribonucleoprotein complex containing mRNAs and RNA-binding proteins including DDX5, HNRNPH2 and SRSF1 as well as splicing regulator ARVCF. Interacts with TXNL4/DIM1.

It is found in the nucleus. The protein resides in the nucleoplasm. This protein is a component of the heterogeneous nuclear ribonucleoprotein (hnRNP) complexes which provide the substrate for the processing events that pre-mRNAs undergo before becoming functional, translatable mRNAs in the cytoplasm. Binds poly(RG). The protein is Heterogeneous nuclear ribonucleoprotein H2 (HNRNPH2) of Bos taurus (Bovine).